Consider the following 5488-residue polypeptide: Polyketide synthase PksN (5488 aa).

Residues 3 to 301 are condensation; it reads RQLKSPLSEG…NMMAVRSKNI (299 aa). A WD 1 repeat occupies 165 to 205; sequence QQPSTADYYDFVDWENRMLTGREGEEHLAYWKEQLSGSLPV. The interval 493-903 is adenylation; the sequence is TYKEVDEKST…EFPGILDQAV (411 aa). A WD 2 repeat occupies 965-1006; it reads RKELEKREIVFNRRKPNHLQLTEIEDQVLRIWEETLKVSGFG. Residues 983–1058 enclose the Carrier 1 domain; the sequence is LQLTEIEDQV…AISEYILEMK (76 aa). The residue at position 1018 (serine 1018) is an O-(pantetheine 4'-phosphoryl)serine. Positions 1089-1515 constitute a Ketosynthase family 3 (KS3) 1 domain; that stretch reads DDSVAIVGIS…GTNAHAIFEQ (427 aa). Residues cysteine 1261, histidine 1397, and histidine 1437 each act as for beta-ketoacyl synthase 1 activity in the active site. The N-terminal hotdog fold 1 stretch occupies residues 1700–1826; it reads HPLVHHNTSV…GKAELIQLKR (127 aa). In terms of domain architecture, PKS/mFAS DH 1 spans 1700-1992; it reads HPLVHHNTSV…TRVMEADIQT (293 aa). Histidine 1729 (proton acceptor; for dehydratase activity 1) is an active-site residue. Residues 1840-1992 are C-terminal hotdog fold 1; the sequence is DQSKMDAASF…TRVMEADIQT (153 aa). Residue aspartate 1900 is the Proton donor; for dehydratase activity 1 of the active site. One copy of the WD 3 repeat lies at 2165–2204; the sequence is KQAKGDGSKPWKDNGVYLISGGAGGLGHIFAKEIAEQTKN. Positions 2448–2525 constitute a Carrier 2 domain; that stretch reads SLLDKVKAML…AFGKHLSEEY (78 aa). O-(pantetheine 4'-phosphoryl)serine is present on serine 2485. A Ketosynthase family 3 (KS3) 2 domain is found at 2576-3012; sequence PEPIAIVGIS…GVNAHVIIEE (437 aa). Catalysis depends on for beta-ketoacyl synthase 2 activity residues cysteine 2747, histidine 2882, and histidine 2928. The stretch at 3038-3109 forms a coiled coil; the sequence is KNEARLKEHA…AAEKSGVEDV (72 aa). The tract at residues 3207–3332 is N-terminal hotdog fold 2; it reads HPLMHQNTSN…GSAVLNPAEN (126 aa). The 286-residue stretch at 3207–3492 folds into the PKS/mFAS DH 2 domain; the sequence is HPLMHQNTSN…FRAAEGGSGS (286 aa). Histidine 3236 serves as the catalytic Proton acceptor; for dehydratase activity 2. Positions 3346–3492 are C-terminal hotdog fold 2; sequence QESHFSVNEV…FRAAEGGSGS (147 aa). Aspartate 3408 (proton donor; for dehydratase activity 2) is an active-site residue. A coiled-coil region spans residues 3626–3655; the sequence is DSHENVESVIEKLKENKRHTEDQHIKYEKG. A WD 4 repeat occupies 3666 to 3705; it reads QIDDREISMPWRDKGVYLITGGAGGLGFIFAKEIARQAEQ. One can recognise a Carrier 3 domain in the interval 3952 to 4026; that stretch reads DHIQEVLKQT…AFAGYLSEEY (75 aa). The residue at position 3986 (serine 3986) is an O-(pantetheine 4'-phosphoryl)serine. The region spanning 4076-4511 is the Ketosynthase family 3 (KS3) 3 domain; the sequence is PEPIAIVGMS…GVNAHVVIEE (436 aa). Active-site for beta-ketoacyl synthase 3 activity residues include cysteine 4245, histidine 4380, and histidine 4427. Residues 4706-4830 are N-terminal hotdog fold 3; the sequence is HPLIHVNTSD…GSASIRGAGD (125 aa). A PKS/mFAS DH 3 domain is found at 4706–4988; sequence HPLIHVNTSD…SRLLEEGIQP (283 aa). The active-site Proton acceptor; for dehydratase activity 3 is the histidine 4735. A C-terminal hotdog fold 3 region spans residues 4844–4988; that stretch reads SLSTLSHDQC…SRLLEEGIQP (145 aa). Residue aspartate 4906 is the Proton donor; for dehydratase activity 3 of the active site. The stretch at 5206–5244 is one WD 5 repeat; the sequence is HNNQPVHTKYKHGGVYVVIGGAGGIGEAWSEYMIRTYQA. A coiled-coil region spans residues 5275-5303; it reads IQADAANREELERAYETMKQTHREINGII.

The protein belongs to the ATP-dependent AMP-binding enzyme family. Pantetheine 4'-phosphate is required as a cofactor.

The protein resides in the cytoplasm. The protein operates within antibiotic biosynthesis; bacillaene biosynthesis. Functionally, involved in some intermediate steps for the synthesis of the antibiotic polyketide bacillaene which is involved in secondary metabolism. This is Polyketide synthase PksN (pksN) from Bacillus subtilis (strain 168).